The chain runs to 142 residues: SLSDKDKAAVKALWTTISKSSDAIGNDALSRMIVVYPQTKTYFSHWPDVTPGSTHIRDHGKKVMGGISLAVSKIDDLKTGLFELSEQHAFKLRVDPANFKILNHCILVVIATMFPKEFTPEAHVSLDKFLSGVALALAERYR.

Position 1 is an N-acetylserine (Ser-1). A Globin domain is found at 1–142; it reads SLSDKDKAAV…VALALAERYR (142 aa). His-59 contacts O2. A heme b-binding site is contributed by His-88.

This sequence belongs to the globin family. Hb1 is a heterotetramer of two alpha chains and two beta-1 chains, while Hb2 is a heterotetramer of two alpha chains and two beta-2 chains. Red blood cells.

Its function is as follows. Involved in oxygen transport from gills to the various peripheral tissues. The protein is Hemoglobin subunit alpha (hba) of Cygnodraco mawsoni (Antarctic dragonfish).